Here is a 527-residue protein sequence, read N- to C-terminus: Mitogen-activated protein kinase kinae MKK2 (527 aa).

Disordered stretches follow at residues 1-143 and 156-189; these read MHDQ…SAGS and IGSTRPQGTPDPASAVGSIYSERSDGGAGMDKDG. Positions 107-129 are enriched in low complexity; sequence QQGQSASGGSESSAAHSRSGSFG. A compositionally biased stretch (polar residues) spans 134–143; sequence RTSNPTSAGS. Positions 177–189 are enriched in basic and acidic residues; sequence ERSDGGAGMDKDG. In terms of domain architecture, Protein kinase spans 227-497; that stretch reads IVELGGLGEG…PWRMLEHPWM (271 aa). Residues 233 to 241 and lysine 256 each bind ATP; that span reads LGEGAGGAV.

The protein belongs to the protein kinase superfamily. STE Ser/Thr protein kinase family. MAP kinase kinase subfamily. Interacts with the adapter protein MST50.

The enzyme catalyses L-seryl-[protein] + ATP = O-phospho-L-seryl-[protein] + ADP + H(+). It carries out the reaction L-threonyl-[protein] + ATP = O-phospho-L-threonyl-[protein] + ADP + H(+). In terms of biological role, mitogen-activated protein kinase kinase; part of the MCK1-MKK2-MPS1 MAP kinase (MAPK) signal transduction cascade that is essential for appressorium formation, penetration and invasive growth. Beside its role in pathogenesis, the MPS1 cascade is active in conidiation and cellular stress responses. Targets downstream of the the MPS1-MAPK pathway include transcription factors MIG1 and SWI6, as well as GSK1 and MPG1. This is Mitogen-activated protein kinase kinae MKK2 from Pyricularia oryzae (strain 70-15 / ATCC MYA-4617 / FGSC 8958) (Rice blast fungus).